The following is a 2623-amino-acid chain: Immunoglobulin superfamily member 10 (2623 aa).

The N-terminal stretch at 1–28 (MKVKGRGITCLLVSFAVICLVATPGGKA) is a signal peptide. The LRRNT domain occupies 29–56 (CPRRCACYMPTEVHCTFRYLTSIPDSIP). 6 LRR repeats span residues 58–79 (NVER…DFSG), 82–103 (KLEL…TFSD), 106–127 (ALQV…TFYG), 130–151 (SLTR…VFYG), 154–175 (FLRL…TFVS), and 186–207 (FIKF…MVSY). The region spanning 219–281 (NPWTCDCHLK…VSAAAFQCAK (63 aa)) is the LRRCT domain. Residues Asn319 and Asn439 are each glycosylated (N-linked (GlcNAc...) asparagine). 2 consecutive Ig-like C2-type domains span residues 461-567 (PRAE…YRIT) and 571-661 (PLVE…FQVS). Intrachain disulfides connect Cys497–Cys551 and Cys595–Cys645. An N-linked (GlcNAc...) asparagine glycan is attached at Asn627. Disordered stretches follow at residues 668–692 (RPLE…HLKE) and 767–788 (AMPD…QLPN). Residues Asn774 and Asn999 are each glycosylated (N-linked (GlcNAc...) asparagine). Disordered stretches follow at residues 1334-1376 (TQTE…AMTP) and 1434-1453 (STIA…TTTR). Basic and acidic residues predominate over residues 1335–1356 (QTERSRAQTIQREQEPQKKNRT). Polar residues predominate over residues 1357 to 1373 (DPNISPDQSSGFTTPTA). Ig-like C2-type domains are found at residues 1648–1739 (PRIV…VTLS), 1745–1836 (PRIL…VKIQ), 1841–1933 (PPVI…VMLT), 1941–2034 (PRIE…VSLR), 2037–2135 (PAKI…VHLT), 2141–2229 (PRIR…YKLD), 2234–2331 (PPLI…LEVL), 2337–2427 (PTFR…VILE), 2432–2518 (PVIL…TLIT), and 2528–2623 (PRIT…IQVI). 3 cysteine pairs are disulfide-bonded: Cys1670–Cys1723, Cys1767–Cys1820, and Cys1864–Cys1917. N-linked (GlcNAc...) asparagine glycosylation is found at Asn1899 and Asn1962. 7 disulfides stabilise this stretch: Cys1963–Cys2016, Cys2060–Cys2119, Cys2163–Cys2213, Cys2261–Cys2313, Cys2359–Cys2411, Cys2454–Cys2506, and Cys2550–Cys2605. The N-linked (GlcNAc...) asparagine glycan is linked to Asn2101. Tyr2603 is subject to Phosphotyrosine.

The protein localises to the secreted. Functionally, involved in the control of early migration of neurons expressing gonadotropin-releasing hormone (GNRH neurons). May be involved in the maintenance of osteochondroprogenitor cells pool. This Homo sapiens (Human) protein is Immunoglobulin superfamily member 10 (IGSF10).